The sequence spans 511 residues: MKKRALVSVSDKTGVVEFVKGLLEQGIEVISTGGTKKLLEENGLQVIGISEVTGFPEIMDGRVKTLHPNIHGGLLAVRDNETHVAQMNELGMEPIDFVIVNLYPFKETIAKPDVTFADAIENIDIGGPTMIRSAAKNHKFVSVIVDPVDYDVVLAELKVNGEVKEETKRKLAAKVFRHTAAYDALISNYLTEQMGEESPETLTVTFEKKQDLRYGENPHQTATFYKAPFAVTSSVAYAEQLHGKELSYNNINDADAALSIVKEFTEPAVVAVKHMNPCGVGVGTDIHEAYTRAYEADPVSIFGGIIAANREIDKATAEKLHEIFLEIIIAPSFSKEALEVLQSKKNLRLLTVNIEKATSASKKLTSVQGGLLVQEEDTLSLDESTISIPTKREPSEQEWKDLKLAWKVVKHVKSNAIVLAKDDMTIGVGAGQMNRVGSAKIAITQAGEKAQGSALASDAFFPMPDTLEEAAKAGITAIIQPGGSIRDEDSIKVADTYGIAMVFTGVRHFKH.

Residues 1–145 (MKKRALVSVS…KNHKFVSVIV (145 aa)) form the MGS-like domain.

This sequence belongs to the PurH family.

It catalyses the reaction (6R)-10-formyltetrahydrofolate + 5-amino-1-(5-phospho-beta-D-ribosyl)imidazole-4-carboxamide = 5-formamido-1-(5-phospho-D-ribosyl)imidazole-4-carboxamide + (6S)-5,6,7,8-tetrahydrofolate. The enzyme catalyses IMP + H2O = 5-formamido-1-(5-phospho-D-ribosyl)imidazole-4-carboxamide. Its pathway is purine metabolism; IMP biosynthesis via de novo pathway; 5-formamido-1-(5-phospho-D-ribosyl)imidazole-4-carboxamide from 5-amino-1-(5-phospho-D-ribosyl)imidazole-4-carboxamide (10-formyl THF route): step 1/1. It participates in purine metabolism; IMP biosynthesis via de novo pathway; IMP from 5-formamido-1-(5-phospho-D-ribosyl)imidazole-4-carboxamide: step 1/1. The protein is Bifunctional purine biosynthesis protein PurH of Bacillus cereus (strain ZK / E33L).